A 111-amino-acid polypeptide reads, in one-letter code: MVAAKKTKKSTDNINNKLQLVMKSGKYTLGYKTVLRTLRNSKAKLVIISNNCPPLRKSEIEYYAMLAKVTVHHFHGNNVDLGTACGKYFRVCCLSIIDPGDSDIIKTTGEQ.

This sequence belongs to the eukaryotic ribosomal protein eL30 family.

The chain is Large ribosomal subunit protein eL30 (RPL30) from Oryza sativa subsp. japonica (Rice).